We begin with the raw amino-acid sequence, 488 residues long: L-arabinose isomerase 2 (488 aa).

Residues Glu-306, Glu-331, His-348, and His-447 each coordinate Mn(2+).

The protein belongs to the arabinose isomerase family. The cofactor is Mn(2+).

It carries out the reaction beta-L-arabinopyranose = L-ribulose. Its pathway is carbohydrate degradation; L-arabinose degradation via L-ribulose; D-xylulose 5-phosphate from L-arabinose (bacterial route): step 1/3. In terms of biological role, catalyzes the conversion of L-arabinose to L-ribulose. The chain is L-arabinose isomerase 2 from Clostridium acetobutylicum (strain ATCC 824 / DSM 792 / JCM 1419 / IAM 19013 / LMG 5710 / NBRC 13948 / NRRL B-527 / VKM B-1787 / 2291 / W).